A 442-amino-acid polypeptide reads, in one-letter code: Citrate transporter CitP (442 aa).

Transmembrane regions (helical) follow at residues 27–47 (ISGI…IAIS), 59–79 (IFAL…LPIF), 83–103 (LGGG…TNVI), 114–134 (FING…SSLF), 151–171 (VAFI…VIIG), 177–197 (AILY…IVPL), 209–229 (SAGI…LAII), 267–287 (YVQL…GTML), 293–313 (GINA…FGLL), 321–341 (VIMF…AGVG), 349–369 (VLLA…IVAI), 387–409 (AAIT…VLAA), and 421–441 (MGNR…VTFM).

This sequence belongs to the 2-hydroxycarboxylate transporter (2-HCT) (TC 2.A.24) family.

The protein localises to the cell membrane. The enzyme catalyses (R)-lactate(in) + citrate(out) = (R)-lactate(out) + citrate(in). It carries out the reaction (S)-lactate(in) + citrate(out) = (S)-lactate(out) + citrate(in). The catalysed reaction is citrate(in) + H(+)(in) = citrate(out) + H(+)(out). With respect to regulation, the transport of citrate is unaffected by the presence of citrate in the growth media. Functionally, secondary transporter involved in citrate metabolism. During cometabolism of citrate and glucose, catalyzes the uptake of divalent citrate into the cell coupled to the exit of monovalent lactate, the end product of glycolysis in L.lactis. The citrate/lactate exchange is electrogenic and results in the generation of a membrane potential. Plays an important role in resistance against lactate toxicity at low pH. In the absence of glucose, i.e. when no lactate is produced, CitP catalyzes the uptake of citrate in exchange with the citrate metabolism intermediates pyruvate and alpha-acetolactate, and the end product acetate. In the absence of glucose, CitP can also catalyze the proton-dependent transport of citrate. In vitro, shows a broad substrate specificity. Can transport a wide variety of mono- and dicarboxylates of the form X-CR(2)-COO(-), where X represents OH (2-hydroxy acid), O (2-keto acid), or H (acid) and R groups differ in size, hydrophobicity and composition. Many of the substrates are intermediates or products of amino acid metabolism, suggesting that CitP may have a broader physiological function than its role in citrate metabolism. This is Citrate transporter CitP from Lactococcus lactis subsp. lactis (Streptococcus lactis).